Here is a 344-residue protein sequence, read N- to C-terminus: Holliday junction branch migration complex subunit RuvB (344 aa).

The segment at 1–182 is large ATPase domain (RuvB-L); it reads MRIEALNTAP…FGINSRLDYY (182 aa). ATP is bound by residues I21, R22, G63, K66, T67, T68, 129–131, R172, Y182, and R219; that span reads EDY. T67 is a Mg(2+) binding site. The segment at 183-253 is small ATPAse domain (RuvB-S); that stretch reads NPELLQSIII…VARRTLESLE (71 aa). Positions 256-344 are head domain (RuvB-H); it reads EGGLDDMDKK…GSLFDTAEDG (89 aa). DNA is bound by residues R311 and R316.

Belongs to the RuvB family. In terms of assembly, homohexamer. Forms an RuvA(8)-RuvB(12)-Holliday junction (HJ) complex. HJ DNA is sandwiched between 2 RuvA tetramers; dsDNA enters through RuvA and exits via RuvB. An RuvB hexamer assembles on each DNA strand where it exits the tetramer. Each RuvB hexamer is contacted by two RuvA subunits (via domain III) on 2 adjacent RuvB subunits; this complex drives branch migration. In the full resolvosome a probable DNA-RuvA(4)-RuvB(12)-RuvC(2) complex forms which resolves the HJ.

It localises to the cytoplasm. The enzyme catalyses ATP + H2O = ADP + phosphate + H(+). The RuvA-RuvB-RuvC complex processes Holliday junction (HJ) DNA during genetic recombination and DNA repair, while the RuvA-RuvB complex plays an important role in the rescue of blocked DNA replication forks via replication fork reversal (RFR). RuvA specifically binds to HJ cruciform DNA, conferring on it an open structure. The RuvB hexamer acts as an ATP-dependent pump, pulling dsDNA into and through the RuvAB complex. RuvB forms 2 homohexamers on either side of HJ DNA bound by 1 or 2 RuvA tetramers; 4 subunits per hexamer contact DNA at a time. Coordinated motions by a converter formed by DNA-disengaged RuvB subunits stimulates ATP hydrolysis and nucleotide exchange. Immobilization of the converter enables RuvB to convert the ATP-contained energy into a lever motion, pulling 2 nucleotides of DNA out of the RuvA tetramer per ATP hydrolyzed, thus driving DNA branch migration. The RuvB motors rotate together with the DNA substrate, which together with the progressing nucleotide cycle form the mechanistic basis for DNA recombination by continuous HJ branch migration. Branch migration allows RuvC to scan DNA until it finds its consensus sequence, where it cleaves and resolves cruciform DNA. This chain is Holliday junction branch migration complex subunit RuvB, found in Chlorobaculum tepidum (strain ATCC 49652 / DSM 12025 / NBRC 103806 / TLS) (Chlorobium tepidum).